The sequence spans 536 residues: Fanconi anemia group E protein (536 aa).

An interaction with FANCC region spans residues 150–371; sequence MEGASPLSER…VLTRSLFLGR (222 aa). The segment at 171 to 252 is disordered; it reads LGLGGRRLKS…ADGGSASPIK (82 aa). Basic and acidic residues predominate over residues 230 to 239; sequence EKERPEHKSL. The residue at position 249 (S249) is a Phosphoserine. Residue T346 is modified to Phosphothreonine; by CHEK1. S374 carries the phosphoserine; by CHEK1 modification.

As to quaternary structure, belongs to the multisubunit FA complex composed of FANCA, FANCB, FANCC, FANCE, FANCF, FANCG, FANCL/PHF9 and FANCM. The complex is not found in FA patients. Interacts with FANCC and FANCD2. Phosphorylated. Phosphorylation by CHEK1 at Thr-346 and Ser-374 regulates its function in DNA cross-links repair. In terms of processing, ubiquitinated. Phosphorylation by CHEK1 induces polyubiquitination and degradation.

It localises to the nucleus. Functionally, as part of the Fanconi anemia (FA) complex functions in DNA cross-links repair. Required for the nuclear accumulation of FANCC and provides a critical bridge between the FA complex and FANCD2. The polypeptide is Fanconi anemia group E protein (FANCE) (Homo sapiens (Human)).